The sequence spans 114 residues: Large ribosomal subunit protein bL19 (114 aa).

It belongs to the bacterial ribosomal protein bL19 family.

This protein is located at the 30S-50S ribosomal subunit interface and may play a role in the structure and function of the aminoacyl-tRNA binding site. The protein is Large ribosomal subunit protein bL19 of Clostridium botulinum (strain ATCC 19397 / Type A).